A 198-amino-acid polypeptide reads, in one-letter code: MYDYIKGQLTKITAKYIVVEANGLGYMINVANPYSFTHSVNQLVTIYLHQVIREDAHLLFGFHTEDEKDVFLKLISVSGIGPTTALAIVAVDDNEGLVNAIDNSDIKYLMKFPKIGKKTAQQMVLDLAGKFVEAPQETGHTKARSNKAGNTQLDEAIEALLALGYTATELKKIRAFFEGTSETAEQYIKSALKLLMKG.

A domain I region spans residues 1–63 (MYDYIKGQLT…EDAHLLFGFH (63 aa)). The tract at residues 64-142 (TEDEKDVFLK…EAPQETGHTK (79 aa)) is domain II. The interval 143–147 (ARSNK) is flexible linker. The segment at 148–198 (AGNTQLDEAIEALLALGYTATELKKIRAFFEGTSETAEQYIKSALKLLMKG) is domain III.

It belongs to the RuvA family. As to quaternary structure, homotetramer. Forms an RuvA(8)-RuvB(12)-Holliday junction (HJ) complex. HJ DNA is sandwiched between 2 RuvA tetramers; dsDNA enters through RuvA and exits via RuvB. An RuvB hexamer assembles on each DNA strand where it exits the tetramer. Each RuvB hexamer is contacted by two RuvA subunits (via domain III) on 2 adjacent RuvB subunits; this complex drives branch migration. In the full resolvosome a probable DNA-RuvA(4)-RuvB(12)-RuvC(2) complex forms which resolves the HJ.

The protein resides in the cytoplasm. The RuvA-RuvB-RuvC complex processes Holliday junction (HJ) DNA during genetic recombination and DNA repair, while the RuvA-RuvB complex plays an important role in the rescue of blocked DNA replication forks via replication fork reversal (RFR). RuvA specifically binds to HJ cruciform DNA, conferring on it an open structure. The RuvB hexamer acts as an ATP-dependent pump, pulling dsDNA into and through the RuvAB complex. HJ branch migration allows RuvC to scan DNA until it finds its consensus sequence, where it cleaves and resolves the cruciform DNA. The sequence is that of Holliday junction branch migration complex subunit RuvA from Streptococcus pyogenes serotype M49 (strain NZ131).